The chain runs to 174 residues: Adipose-secreted signaling protein (174 aa).

Ala2 carries the post-translational modification N-acetylalanine. Residue Thr147 is modified to Phosphothreonine.

The protein belongs to the ADISSP family.

The protein localises to the secreted. Its function is as follows. Adipocyte-secreted protein (adipokine) that acts as a key regulator for white adipose tissue (WAT) thermogenesis and glucose homeostasis at least in part through activation of protein kinase A (PKA). This Bos taurus (Bovine) protein is Adipose-secreted signaling protein.